Reading from the N-terminus, the 299-residue chain is Oxygen-dependent coproporphyrinogen-III oxidase (299 aa).

Ser-92 is a substrate binding site. A divalent metal cation-binding residues include His-96 and His-106. The Proton donor role is filled by His-106. Position 108-110 (108-110) interacts with substrate; sequence NVR. Positions 145 and 175 each coordinate a divalent metal cation. The important for dimerization stretch occupies residues 239-274; that stretch reads YVEFNLVYDRGTLFGLQSGGRAESILMSLPPRVRWE. 257–259 contacts substrate; the sequence is GGR.

Belongs to the aerobic coproporphyrinogen-III oxidase family. Homodimer. The cofactor is a divalent metal cation.

The protein localises to the cytoplasm. It carries out the reaction coproporphyrinogen III + O2 + 2 H(+) = protoporphyrinogen IX + 2 CO2 + 2 H2O. It functions in the pathway porphyrin-containing compound metabolism; protoporphyrin-IX biosynthesis; protoporphyrinogen-IX from coproporphyrinogen-III (O2 route): step 1/1. In terms of biological role, involved in the heme biosynthesis. Catalyzes the aerobic oxidative decarboxylation of propionate groups of rings A and B of coproporphyrinogen-III to yield the vinyl groups in protoporphyrinogen-IX. The sequence is that of Oxygen-dependent coproporphyrinogen-III oxidase from Xanthomonas euvesicatoria pv. vesicatoria (strain 85-10) (Xanthomonas campestris pv. vesicatoria).